A 156-amino-acid chain; its full sequence is Small ribosomal subunit protein uS7 (156 aa).

It belongs to the universal ribosomal protein uS7 family. Part of the 30S ribosomal subunit. Contacts proteins S9 and S11.

In terms of biological role, one of the primary rRNA binding proteins, it binds directly to 16S rRNA where it nucleates assembly of the head domain of the 30S subunit. Is located at the subunit interface close to the decoding center, probably blocks exit of the E-site tRNA. In Mycoplasmopsis synoviae (strain 53) (Mycoplasma synoviae), this protein is Small ribosomal subunit protein uS7.